Here is an 862-residue protein sequence, read N- to C-terminus: DNA mismatch repair protein MutS (862 aa).

Residue 608–615 (GPNMAGKS) coordinates ATP.

This sequence belongs to the DNA mismatch repair MutS family.

In terms of biological role, this protein is involved in the repair of mismatches in DNA. It is possible that it carries out the mismatch recognition step. This protein has a weak ATPase activity. This chain is DNA mismatch repair protein MutS, found in Borreliella afzelii (strain PKo) (Borrelia afzelii).